Here is a 341-residue protein sequence, read N- to C-terminus: L-threonine 3-dehydrogenase (341 aa).

Residue cysteine 38 coordinates Zn(2+). Catalysis depends on charge relay system residues threonine 40 and histidine 43. Positions 63, 64, 93, 96, 99, and 107 each coordinate Zn(2+). Residues isoleucine 175, aspartate 195, arginine 200, 262–264, and 286–287 contribute to the NAD(+) site; these read LGI and IY.

Belongs to the zinc-containing alcohol dehydrogenase family. As to quaternary structure, homotetramer. Zn(2+) is required as a cofactor.

It localises to the cytoplasm. The catalysed reaction is L-threonine + NAD(+) = (2S)-2-amino-3-oxobutanoate + NADH + H(+). It functions in the pathway amino-acid degradation; L-threonine degradation via oxydo-reductase pathway; glycine from L-threonine: step 1/2. Catalyzes the NAD(+)-dependent oxidation of L-threonine to 2-amino-3-ketobutyrate. This chain is L-threonine 3-dehydrogenase, found in Shewanella halifaxensis (strain HAW-EB4).